Consider the following 61-residue polypeptide: Photosystem II reaction center protein K (61 aa).

Positions 1–24 are excised as a propeptide; sequence MLNIFSLICICLNSALYSSNFFFA. Residues 40 to 60 traverse the membrane as a helical segment; the sequence is MPVIPLFFFLLAFVWQAAVSF.

Belongs to the PsbK family. PSII is composed of 1 copy each of membrane proteins PsbA, PsbB, PsbC, PsbD, PsbE, PsbF, PsbH, PsbI, PsbJ, PsbK, PsbL, PsbM, PsbT, PsbX, PsbY, PsbZ, Psb30/Ycf12, at least 3 peripheral proteins of the oxygen-evolving complex and a large number of cofactors. It forms dimeric complexes.

It localises to the plastid. The protein resides in the chloroplast thylakoid membrane. In terms of biological role, one of the components of the core complex of photosystem II (PSII). PSII is a light-driven water:plastoquinone oxidoreductase that uses light energy to abstract electrons from H(2)O, generating O(2) and a proton gradient subsequently used for ATP formation. It consists of a core antenna complex that captures photons, and an electron transfer chain that converts photonic excitation into a charge separation. This chain is Photosystem II reaction center protein K, found in Vitis vinifera (Grape).